We begin with the raw amino-acid sequence, 381 residues long: tRNA (guanine(6)-N2)-methyltransferase (381 aa).

A THUMP domain is found at 43–157 (KLIPKINYLS…FDELIVGIDT (115 aa)). Residues 173-177 (HPAHL), 204-206 (SGT), D261, 289-290 (DA), and N306 each bind S-adenosyl-L-methionine.

Belongs to the methyltransferase superfamily.

The protein localises to the cytoplasm. It catalyses the reaction guanosine(6) in tRNA + S-adenosyl-L-methionine = N(2)-methylguanosine(6) in tRNA + S-adenosyl-L-homocysteine + H(+). Its function is as follows. S-adenosyl-L-methionine-dependent methyltransferase that catalyzes the methylation of the guanosine nucleotide at position 6 (m2G6) in tRNA(Cys). In Methanocaldococcus jannaschii (strain ATCC 43067 / DSM 2661 / JAL-1 / JCM 10045 / NBRC 100440) (Methanococcus jannaschii), this protein is tRNA (guanine(6)-N2)-methyltransferase.